A 214-amino-acid chain; its full sequence is Adenylate kinase (214 aa).

Residue 10-15 (GAGKGT) coordinates ATP. The interval 30 to 59 (STGDMLRAAVKAGTPLGVKAQEIMIQGGLV) is NMP. AMP-binding positions include threonine 31, arginine 36, 57 to 59 (GLV), 85 to 88 (GFPR), and glutamine 92. The tract at residues 126 to 163 (GRRSCSSCGKGYHLVFDPPLRAGVCDVCGSGLVQRADD) is LID. Arginine 127 provides a ligand contact to ATP. 4 residues coordinate Zn(2+): cysteine 130, cysteine 133, cysteine 150, and cysteine 153. 2 residues coordinate AMP: arginine 160 and arginine 171. Residue glycine 199 coordinates ATP.

The protein belongs to the adenylate kinase family. Monomer.

It is found in the cytoplasm. The enzyme catalyses AMP + ATP = 2 ADP. The protein operates within purine metabolism; AMP biosynthesis via salvage pathway; AMP from ADP: step 1/1. In terms of biological role, catalyzes the reversible transfer of the terminal phosphate group between ATP and AMP. Plays an important role in cellular energy homeostasis and in adenine nucleotide metabolism. The protein is Adenylate kinase of Trichlorobacter lovleyi (strain ATCC BAA-1151 / DSM 17278 / SZ) (Geobacter lovleyi).